The sequence spans 72 residues: Small ribosomal subunit protein bS20 (72 aa).

It belongs to the bacterial ribosomal protein bS20 family.

Binds directly to 16S ribosomal RNA. The sequence is that of Small ribosomal subunit protein bS20 (rpsT) from Proteus mirabilis.